Here is a 775-residue protein sequence, read N- to C-terminus: Glutamine--tRNA ligase (775 aa).

At Ala-2 the chain carries N-acetylalanine. The residue at position 70 (Ser-70) is a Phosphoserine. ATP is bound by residues 271-273 (EPN) and 277-283 (HIGHAKA). Asp-303 serves as a coordination point for L-glutamine. Position 309 is an N6-acetyllysine (Lys-309). Residue Tyr-438 participates in L-glutamine binding. ATP is bound by residues Thr-457, 486–487 (RL), and 494–496 (VSK). At Ser-495 the chain carries Phosphoserine.

Belongs to the class-I aminoacyl-tRNA synthetase family. Monomer. Part of a multisubunit complex that groups tRNA ligases for Arg (RARS1), Asp (DARS1), Gln (QARS1), Ile (IARS1), Leu (LARS1), Lys (KARS1), Met (MARS1) the bifunctional ligase for Glu and Pro (EPRS1) and the auxiliary subunits AIMP1/p43, AIMP2/p38 and EEF1E1/p18. Interacts with RARS1. Part of a complex composed of RARS1, QARS1 and AIMP1.

Its subcellular location is the cytoplasm. The protein localises to the cytosol. It catalyses the reaction tRNA(Gln) + L-glutamine + ATP = L-glutaminyl-tRNA(Gln) + AMP + diphosphate. Functionally, glutamine--tRNA ligase. Plays a critical role in brain development. The chain is Glutamine--tRNA ligase (Qars1) from Mus musculus (Mouse).